Reading from the N-terminus, the 369-residue chain is Peptide chain release factor 2 (369 aa).

Q252 is subject to N5-methylglutamine.

This sequence belongs to the prokaryotic/mitochondrial release factor family. Post-translationally, methylated by PrmC. Methylation increases the termination efficiency of RF2.

It is found in the cytoplasm. In terms of biological role, peptide chain release factor 2 directs the termination of translation in response to the peptide chain termination codons UGA and UAA. The sequence is that of Peptide chain release factor 2 from Staphylococcus aureus (strain bovine RF122 / ET3-1).